A 276-amino-acid polypeptide reads, in one-letter code: Small ribosomal subunit protein uS3 (276 aa).

Positions isoleucine 43–lysine 111 constitute a KH type-2 domain. The segment covering alanine 218–glycine 227 has biased composition (low complexity). The disordered stretch occupies residues alanine 218–alanine 276. A compositionally biased stretch (basic and acidic residues) spans proline 228–aspartate 243. Residues alanine 253–alanine 276 are compositionally biased toward low complexity.

Belongs to the universal ribosomal protein uS3 family. In terms of assembly, part of the 30S ribosomal subunit. Forms a tight complex with proteins S10 and S14.

Its function is as follows. Binds the lower part of the 30S subunit head. Binds mRNA in the 70S ribosome, positioning it for translation. In Pseudarthrobacter chlorophenolicus (strain ATCC 700700 / DSM 12829 / CIP 107037 / JCM 12360 / KCTC 9906 / NCIMB 13794 / A6) (Arthrobacter chlorophenolicus), this protein is Small ribosomal subunit protein uS3.